Consider the following 82-residue polypeptide: Acyl carrier protein (82 aa).

One can recognise a Carrier domain in the interval 4-79 (PEMEARLKQI…DALNYIEQKL (76 aa)). Ser-39 carries the post-translational modification O-(pantetheine 4'-phosphoryl)serine.

The protein belongs to the acyl carrier protein (ACP) family. In terms of processing, 4'-phosphopantetheine is transferred from CoA to a specific serine of apo-ACP by AcpS. This modification is essential for activity because fatty acids are bound in thioester linkage to the sulfhydryl of the prosthetic group.

It is found in the cytoplasm. It functions in the pathway lipid metabolism; fatty acid biosynthesis. Carrier of the growing fatty acid chain in fatty acid biosynthesis. This chain is Acyl carrier protein, found in Roseiflexus castenholzii (strain DSM 13941 / HLO8).